We begin with the raw amino-acid sequence, 367 residues long: Forkhead box protein I2-B (367 aa).

Over residues 31-40 (QQQNQQLPQR) the composition is skewed to low complexity. A disordered region spans residues 31-51 (QQQNQQLPQRPAAPPAPGYGL). The fork-head DNA-binding region spans 124 to 218 (RPPYSYSSLI…DNGNFRRKRK (95 aa)). Positions 224 to 254 (VGAGFDEESNEDKKPLALKSLGPDSPGGASV) are disordered.

It localises to the nucleus. Possible transcriptional activator. This Xenopus laevis (African clawed frog) protein is Forkhead box protein I2-B (foxi2-b).